We begin with the raw amino-acid sequence, 624 residues long: Outer dynein arm-docking complex subunit 4 (624 aa).

TPR repeat units lie at residues 11 to 44 (FPSYMAEGERLYLCGEFTKAIQSFTNALHLQSGD), 46 to 78 (NCLVARSKCYLKMGDLEKSLNDAEASLRNDPTF), 79 to 112 (CKGILQKAETLYTMGDFEFALVFYHRGYKLRPDR), 273 to 309 (LKSLEDIDMLLTSGSADGSLQKAEKVLKKVLEWNQEE), 318 to 351 (GNLYSCIGNAQIELGQMVAALQSHRKDLEIAKEH), 358 to 391 (SRALDNIGRVFARVGKFQQAIDTWEEKIPLAKTT), 395 to 428 (TWLFHEIGRCYLELDQAWQAQSYGEKSQQYAEEE), and 435 to 468 (LNASVLVAQAQVKLRDFESAVNNFEKALERAKLV). The segment at 511–624 (MSQMDLQGAS…VQKLEKTKEE (114 aa)) is disordered. Basic and acidic residues-rich tracts occupy residues 520–557 (SEKEPLRGREEQERVVKQWERDQESEREATDDEQDRKS), 576–588 (IRRESREIYRRLS), and 595–624 (PSEDGSQKQEKKQAEAAKGEVQKLEKTKEE).

In terms of assembly, component of the outer dynein arm-docking complex along with ODAD1, ODAD2, and ODAD3. Interacts with ODAD1; this interaction may facilitate the recruitment and/or attachment of outer dynein arm docking complex proteins, including ODAD1, ODAD3 and ODAD2, to ciliary axonemes. Interacts with components of the IFT complex A, including IFT140, TTC21B/IFT139 and WDR19/IFT144, and the IFT complex B, including IFT46, IFT52 and IFT57. Interacts with CFAP53.

The protein localises to the cell projection. It localises to the cilium. The protein resides in the cytoplasm. It is found in the cytoskeleton. Its subcellular location is the cilium axoneme. In terms of biological role, component of the outer dynein arm-docking complex (ODA-DC) that mediates outer dynein arms (ODA) binding onto the doublet microtubule. Plays an essential role for the assembly of ODA-DC and for the docking of ODA in ciliary axoneme. The polypeptide is Outer dynein arm-docking complex subunit 4 (Odad4) (Mus musculus (Mouse)).